The chain runs to 426 residues: MNLWLWLLYFLPVSGTLKVLPEVRLEVELGGSVFIECPLPQTHVRMYLCRQMTNPAICATVVSNIFVKKEYKRRVTLKPSLNKKLFLVEMTQLTKDDEGIYACGVGTNTDLGKTQKVTLNVRNEFPEYPEPFWDDEPTSEPSPRWWLHRYPEELPWLKMGEHASPSGFIDKVTTLSPKTEAPPVHQPSTNTSVSRHPRVYGASSETPTKPSALLPATTAFKTSARQASRLLEASYSHHTRLHGERTPHYGSQYGREDRGLHISIPEFHILIPTFLGFLLLVLLGLVVKRAIQRRRAFSRRVGRMARRMRGRGPSRQIPTQRRDAPQRPRSQNNVYSACPRRAREPDNVGSAEALLLNAPASAPPALPLVIETSWPHTPSLKMSCEYVSLGHQPAVNVEDQDSNDYINIPGLPHLPSKPPGPRPSRQ.

The N-terminal stretch at 1 to 16 (MNLWLWLLYFLPVSGT) is a signal peptide. Positions 24–121 (RLEVELGGSV…GKTQKVTLNV (98 aa)) constitute an Ig-like domain. 2 disulfide bridges follow: Cys37–Cys103 and Cys49–Cys58. Thr91 is subject to Phosphothreonine. A disordered region spans residues 178–212 (KTEAPPVHQPSTNTSVSRHPRVYGASSETPTKPSA). A helical transmembrane segment spans residues 267–287 (FHILIPTFLGFLLLVLLGLVV). 2 disordered regions span residues 306 to 346 (RRMR…REPD) and 401 to 426 (DSND…PSRQ). The segment covering 415–426 (PSKPPGPRPSRQ) has biased composition (pro residues).

In terms of assembly, interacts (via Ig-like domain) with IGHM (via CH4/Cmu4 domain), both secreted and membrane-bound IgM; the interaction is glycan-independent and multivalent theoretically involving up to eight binding sites for the IgM pentamer. Post-translationally, phosphorylated on both Tyr and Ser residues. O-glycosylated. Sialylated. O-linked glycans regulate trafficking to the plasma membrane.

Its subcellular location is the cell membrane. The protein resides in the early endosome membrane. It localises to the golgi apparatus. It is found in the trans-Golgi network membrane. The protein localises to the lysosome membrane. Functionally, high-affinity Fc receptor for immunoglobulin M (IgM), both secreted and membrane-bound IgM. Primarily regulates IgM transport and homeostasis. In lymphoid cells, enables exocytosis of membrane-bound IgM on the plasma membrane as well as endocytosis of IgM-antigen complexes toward lysosomes for degradation. In mucosal epithelium, mediates retrotranscytosis of antigen-IgM complexes across mucosal M cells toward antigen-presenting cells in mucosal lymphoid tissues. Triggers costimulatory signaling and mediates most of IgM effector functions involved in B cell development and primary immune response to infection. Likely limits tonic IgM BCR signaling to self-antigens for proper negative selection of autoreactive B cells in the bone marrow and for the maintenance of regulatory B cell pool in peripheral lymphoid organs. Mediates antibody responses to T cell-dependent and T cell-independent antigens and promotes induction of an efficient neutralizing IgG response. Engages in cross-talk with antigen-receptor signaling via the non-canonical NF-kappa-B, MAP kinases and calcium signaling pathways. This chain is Immunoglobulin mu Fc receptor, found in Rattus norvegicus (Rat).